The following is a 415-amino-acid chain: Membrane-bound ghrelin O-acyltransferase mboat4 (415 aa).

Residues 1 to 6 (MIDLLW) lie on the Lumenal side of the membrane. The chain crosses the membrane as a helical span at residues 7-28 (ISSDGHPQLFYQFINIPFAFLF). The Cytoplasmic segment spans residues 29–42 (HCLSSQGHLSIINR). The helical transmembrane segment at 43 to 58 (YVYLAMGGFMLAIATM) threads the bilayer. At 59–61 (GPY) the chain is on the lumenal side. A helical membrane pass occupies residues 62-78 (SSLLFLSAIKLLLLIHY). The Cytoplasmic segment spans residues 79–84 (IHPMHL). A helical membrane pass occupies residues 85–103 (HRWILGLQMCWQTCWHLYV). Residues 104–122 (QYQIYWLQEAPDSRLLLAI) lie on the Lumenal side of the membrane. The chain crosses the membrane as a helical span at residues 123-138 (SALMLMTQRISSLSLD). Residues 139-193 (FQEGTISNQSILIPFLTYSLYFPALLGGPLCSFNAFVQSVERQHTSMTSYLGNLT) lie on the Cytoplasmic side of the membrane. The helical transmembrane segment at 194 to 214 (SKISQVIVLVWIKQLFSELLK) threads the bilayer. The Lumenal segment spans residues 215 to 227 (SATFNIDSVCLDV). The chain crosses the membrane as a helical span at residues 228-247 (LWIWIFSLTLRLNYYAHWKM). The Cytoplasmic portion of the chain corresponds to 248-312 (SECVNNAAGL…RKIVFNRTSR (65 aa)). Catalysis depends on residues Asn295 and His326. A helical membrane pass occupies residues 313–326 (SPLFMTFGFSALWH). The Lumenal portion of the chain corresponds to 327 to 328 (GL). The chain crosses the membrane as a helical span at residues 329–345 (HPGQILGFLIWAVTVQA). The Cytoplasmic segment spans residues 346-364 (DYKLHRFSHPKLNSLWRKR). The helical transmembrane segment at 365-385 (LYVCVNWAFTQLTVACVVVCV) threads the bilayer. The Lumenal segment spans residues 386-394 (ELQSLASVK). A helical membrane pass occupies residues 395-415 (LLWSSCIAVFPLLSALILIIL).

This sequence belongs to the membrane-bound acyltransferase family. As to quaternary structure, monomer. Post-translationally, not glycosylated.

Its subcellular location is the endoplasmic reticulum membrane. The enzyme catalyses octanoyl-CoA + L-seryl-[protein] = O-octanoyl-L-seryl-[protein] + CoA. The catalysed reaction is decanoyl-CoA + L-seryl-[protein] = O-decanoyl-L-seryl-[protein] + CoA. It carries out the reaction L-seryl-[protein] + acetyl-CoA = O-acetyl-L-seryl-[protein] + CoA. It catalyses the reaction L-seryl-[protein] + butanoyl-CoA = O-butanoyl-L-seryl-[protein] + CoA. The enzyme catalyses pentanoyl-CoA + L-seryl-[protein] = O-pentanoyl-L-seryl-[protein] + CoA. The catalysed reaction is hexanoyl-CoA + L-seryl-[protein] = O-hexanoyl-L-seryl-[protein] + CoA. It carries out the reaction heptanoyl-CoA + L-seryl-[protein] = O-heptanoyl-L-seryl-[protein] + CoA. It catalyses the reaction nonanoyl-CoA + L-seryl-[protein] = O-nonanoyl-L-seryl-[protein] + CoA. The enzyme catalyses L-seryl-[protein] + dodecanoyl-CoA = O-dodecanoyl-L-seryl-[protein] + CoA. The catalysed reaction is L-seryl-[protein] + tetradecanoyl-CoA = O-tetradecanoyl-L-seryl-[protein] + CoA. It carries out the reaction a fatty acyl-CoA + L-seryl-[protein] = O-fatty acyl-L-seryl-[protein] + CoA. In terms of biological role, catalyzes ghrelin acylation at 'Ser-3' using preferentially octanoyl-CoA, hexanoyl-CoA and decanoyl-CoA as acyl-CoA donors leading to ghrelin activity. In vitro uses also acyl-CoA donors of different lengths from short-chain (C2) to long-chain fatty acids (C16) knowing that acyl-CoA donors from butanoyl-CoA (C4) to dodecanoyl-CoA (C12) are more efficient compared to longer acyl-CoA donors, such as myristoyl-CoA (C14) and palmitoyl-CoA (C16) that are not efficient. The chain is Membrane-bound ghrelin O-acyltransferase mboat4 from Danio rerio (Zebrafish).